A 69-amino-acid chain; its full sequence is Large ribosomal subunit protein bL31 (69 aa).

Zn(2+) is bound by residues cysteine 16, cysteine 18, cysteine 36, and cysteine 39.

The protein belongs to the bacterial ribosomal protein bL31 family. Type A subfamily. As to quaternary structure, part of the 50S ribosomal subunit. Zn(2+) is required as a cofactor.

In terms of biological role, binds the 23S rRNA. In Ruminiclostridium cellulolyticum (strain ATCC 35319 / DSM 5812 / JCM 6584 / H10) (Clostridium cellulolyticum), this protein is Large ribosomal subunit protein bL31.